The primary structure comprises 91 residues: DNA-directed RNA polymerase subunit omega (91 aa).

The protein belongs to the RNA polymerase subunit omega family. In terms of assembly, the RNAP catalytic core consists of 2 alpha, 1 beta, 1 beta' and 1 omega subunit. When a sigma factor is associated with the core the holoenzyme is formed, which can initiate transcription.

The enzyme catalyses RNA(n) + a ribonucleoside 5'-triphosphate = RNA(n+1) + diphosphate. Its function is as follows. Promotes RNA polymerase assembly. Latches the N- and C-terminal regions of the beta' subunit thereby facilitating its interaction with the beta and alpha subunits. The polypeptide is DNA-directed RNA polymerase subunit omega (Erwinia tasmaniensis (strain DSM 17950 / CFBP 7177 / CIP 109463 / NCPPB 4357 / Et1/99)).